We begin with the raw amino-acid sequence, 431 residues long: MLDITYVRQNLAEIESMLQNRQLASEKPRLRQLLEYDKNRRELVQRSDEMKAQRNKVSKEIADIKRTGQGSGEELIRQMKEVSDEITMMDATLSKLASDIEEILLSLPNRLHESVPTGKCAEDNVICKAPVPYLHLLDFPIKNHLELGRSLGILDFERGAKISGAGFPVYIGKGARLERALINFMLDYHTDHHGFTEVFPPFFVNQESLRGTGQWPKFADQVYHIEEDNLYAIPTAEVPVTNLHRNEMIDAERLPVSYVAYSACFRREAGSYGKDTRGFLRVHQFNKVEMVKFTRPEESYQELEKILMSAEAILQALMIPYRVLLLCSGDISANATKCYDIEVWSPAEEKYLEASSCSNFEDYQARRMNIRFKADSRSKPEFVHTLNGSGLATSRLMVSLLEHYQNRDGSITIPEALRPYTGFTSIDQLTS.

An L-serine-binding site is contributed by 235-237 (TAE). Residues 266-268 (RRE) and V282 contribute to the ATP site. E289 provides a ligand contact to L-serine. 353 to 356 (EASS) lines the ATP pocket. Residue S389 participates in L-serine binding.

The protein belongs to the class-II aminoacyl-tRNA synthetase family. Type-1 seryl-tRNA synthetase subfamily. In terms of assembly, homodimer. The tRNA molecule binds across the dimer.

The protein resides in the cytoplasm. It catalyses the reaction tRNA(Ser) + L-serine + ATP = L-seryl-tRNA(Ser) + AMP + diphosphate + H(+). It carries out the reaction tRNA(Sec) + L-serine + ATP = L-seryl-tRNA(Sec) + AMP + diphosphate + H(+). It functions in the pathway aminoacyl-tRNA biosynthesis; selenocysteinyl-tRNA(Sec) biosynthesis; L-seryl-tRNA(Sec) from L-serine and tRNA(Sec): step 1/1. Its function is as follows. Catalyzes the attachment of serine to tRNA(Ser). Is also able to aminoacylate tRNA(Sec) with serine, to form the misacylated tRNA L-seryl-tRNA(Sec), which will be further converted into selenocysteinyl-tRNA(Sec). The polypeptide is Serine--tRNA ligase (Chlorobium phaeobacteroides (strain DSM 266 / SMG 266 / 2430)).